We begin with the raw amino-acid sequence, 367 residues long: MKKQRVVVKIGSSSLADSHGGISTEQLSDHVAALARLKEDGHEVVLITSGAVAAGFSALGYPSRPVTIKGKQAAAAVGQSLLMQAYTEEFRKYGIVTAQLLLTRSDFSRKEQYSNAYATLGELLNRSALPIINENDSISLEELTFGDNDMLSALVSGLVSADMLMIFTDVNGLYDKNPQKNADAKKYYFLPEVTEEISSLAGDAGSKLGTGGMKSKIDAAKTALSLGVSVFIGTGRGQEKFVDVLKGKGDGTYVGNAPQKEMKMNKQWIALHSLVSGQIEVDAGAATAIIQHGKSLLPAGVTNVLGFFQVGEVVEVVTQQGRVIGKGQCTYSAEELRDVKGMQSQDIQVRGERHSYEVIHRDHWVSL.

Lysine 9 lines the ATP pocket. The substrate site is built by serine 49, aspartate 136, and asparagine 148. ATP contacts are provided by residues 168–169 (TD) and 210–216 (TGGMKSK). A PUA domain is found at 276–350 (SGQIEVDAGA…GMQSQDIQVR (75 aa)).

This sequence belongs to the glutamate 5-kinase family.

The protein localises to the cytoplasm. The catalysed reaction is L-glutamate + ATP = L-glutamyl 5-phosphate + ADP. The protein operates within amino-acid biosynthesis; L-proline biosynthesis; L-glutamate 5-semialdehyde from L-glutamate: step 1/2. Its function is as follows. Catalyzes the transfer of a phosphate group to glutamate to form L-glutamate 5-phosphate. The chain is Glutamate 5-kinase from Bacillus cereus (strain B4264).